A 319-amino-acid chain; its full sequence is 4-diphosphocytidyl-2-C-methyl-D-erythritol kinase (319 aa).

Residue Lys-21 is part of the active site. Position 106–116 (106–116) interacts with ATP; that stretch reads PIGAGLAGGSS. Asp-148 is a catalytic residue.

It belongs to the GHMP kinase family. IspE subfamily.

It carries out the reaction 4-CDP-2-C-methyl-D-erythritol + ATP = 4-CDP-2-C-methyl-D-erythritol 2-phosphate + ADP + H(+). The protein operates within isoprenoid biosynthesis; isopentenyl diphosphate biosynthesis via DXP pathway; isopentenyl diphosphate from 1-deoxy-D-xylulose 5-phosphate: step 3/6. Catalyzes the phosphorylation of the position 2 hydroxy group of 4-diphosphocytidyl-2C-methyl-D-erythritol. The sequence is that of 4-diphosphocytidyl-2-C-methyl-D-erythritol kinase from Prochlorococcus marinus (strain MIT 9303).